Consider the following 278-residue polypeptide: Chitosanase (278 aa).

The first 41 residues, 1–41 (MRLKHPTARLALAALLVAVPRSVAAAGTVHAAPAPAGATRL), serve as a signal peptide directing secretion. The Proton donor role is filled by glutamate 63. The active-site Nucleophile is the aspartate 81.

This sequence belongs to the glycosyl hydrolase 46 family.

The protein localises to the secreted. The enzyme catalyses Endohydrolysis of beta-(1-&gt;4)-linkages between D-glucosamine residues in a partly acetylated chitosan.. Aids in the defense against invading fungal pathogens by degrading their cell wall chitosan. The protein is Chitosanase (csn) of Nocardioides sp. (strain N106).